We begin with the raw amino-acid sequence, 206 residues long: Cytochrome b6-f complex iron-sulfur subunit, chloroplastic (206 aa).

Residues 1–29 constitute a chloroplast transit peptide; it reads MAMITSRRAAAPCKAQATRRSRVMSVVRA. A helical membrane pass occupies residues 48 to 68; it reads ILLGGASLPVGSLALGYGAFF. The Rieske domain occupies 92–188; that stretch reads ANAWLATHQK…CDVQEDGLVT (97 aa). The [2Fe-2S] cluster site is built by Cys134, His136, Cys152, and His155. Cys139 and Cys154 form a disulfide bridge.

Belongs to the Rieske iron-sulfur protein family. The 4 large subunits of the cytochrome b6-f complex are cytochrome b6, subunit IV (17 kDa polypeptide, petD), cytochrome f and the Rieske protein, while the 4 small subunits are petG, petL, petM and petN. The complex functions as a dimer. Requires [2Fe-2S] cluster as cofactor.

The protein resides in the plastid. It localises to the chloroplast thylakoid membrane. It catalyses the reaction 2 oxidized [plastocyanin] + a plastoquinol + 2 H(+)(in) = 2 reduced [plastocyanin] + a plastoquinone + 4 H(+)(out). Functionally, component of the cytochrome b6-f complex, which mediates electron transfer between photosystem II (PSII) and photosystem I (PSI), cyclic electron flow around PSI, and state transitions. This Volvox carteri (Green alga) protein is Cytochrome b6-f complex iron-sulfur subunit, chloroplastic (petC).